Here is a 101-residue protein sequence, read N- to C-terminus: Ribonuclease kappa-A (101 aa).

A run of 2 helical transmembrane segments spans residues 13–33 (ACGI…GVFF) and 68–88 (VSYN…FSFC).

Belongs to the RNase K family.

Its subcellular location is the membrane. Functionally, endoribonuclease which preferentially cleaves ApU and ApG phosphodiester bonds. The polypeptide is Ribonuclease kappa-A (rnasek-a) (Xenopus laevis (African clawed frog)).